Here is a 474-residue protein sequence, read N- to C-terminus: Myocyte-specific enhancer factor 2C (474 aa).

The region spanning 3–57 is the MADS-box domain; the sequence is RKKIQITRIMDERNRQVTFTKRKFGLMKKAYELSVLCDCEIALIIFNSTNKLFQY. Lys-4 bears the N6-acetyllysine mark. The segment at residues 58-86 is a DNA-binding region (mef2-type); that stretch reads ASTDMDKVLLKYTEYNEPHESRTNSDIVE. Position 59 is a phosphoserine; by CK2 (Ser-59). The interval 91–118 is disordered; it reads KGLNGCDSPDPDADDSVGHSPESEDKYR. 2 positions are modified to phosphoserine: Ser-98 and Ser-106. Position 108 is a phosphothreonine (Gly-108). The residue at position 110 (Ser-110) is a Phosphoserine. An N6-acetyllysine mark is found at Lys-116 and Lys-119. Residues Ser-222 and Ser-228 each carry the phosphoserine modification. N6-acetyllysine is present on residues Lys-234 and Lys-239. The residue at position 240 (Ser-240) is a Phosphoserine. N6-acetyllysine is present on residues Lys-252 and Lys-264. The tract at residues 271–278 is beta domain; it reads SEDVDLLL. Residues Thr-293 and Thr-300 each carry the phosphothreonine; by MAPK14 modification. The transcription repressor stretch occupies residues 368-399; it reads ACTSTHLSQSSNLSLPSTQSLSIKSEPVSPPR. Polar residues predominate over residues 375 to 390; it reads SQSSNLSLPSTQSLSI. The segment at 375 to 474 is disordered; it reads SQSSNLSLPS…RMRLSEGWAT (100 aa). Lys-391 participates in a covalent cross-link: Glycyl lysine isopeptide (Lys-Gly) (interchain with G-Cter in SUMO). Ser-396 carries the phosphoserine; by CDK5 modification. At Ser-420 the chain carries Phosphoserine; by MAPK7. Over residues 420-433 the composition is skewed to low complexity; that stretch reads SPVDSLSSCSSSYD. Positions 434–444 are enriched in basic and acidic residues; that stretch reads GSDREDHRNEF. The residue at position 446 (Ser-446) is a Phosphoserine.

The protein belongs to the MEF2 family. Forms a complex with class II HDACs in undifferentiating cells. On myogenic differentiation, HDACs are released into the cytoplasm allowing MEF2s to interact with other proteins for activation. Interacts with EP300 in differentiating cells; the interaction acetylates MEF2C leading to increased DNA binding and activation. Interacts with HDAC7 and CARM1. Interacts with HDAC4, HDAC7 AND HDAC9; the interaction with HDACs represses transcriptional activity. Interacts with LPIN1. Interacts with MYOCD. Interacts with AKAP13. Interacts with FOXK1; the interaction inhibits MEF2C transactivation activity. Interacts (via N-terminus) with HABP4; this interaction decreases DNA-binding activity of MEF2C in myocardial cells in response to mechanical stress. Interacts with JPH2; interaction specifically takes place with the Junctophilin-2 N-terminal fragment cleavage product of JPH2. Interacts (via MADS box) with SOX18. Interacts with PHF7; the interaction promotes MEF2C binding to its transcription targets. Phosphorylation on Ser-59 enhances DNA binding activity. Phosphorylation on Ser-396 is required for Lys-391 sumoylation and inhibits transcriptional activity. Post-translationally, acetylated by p300 on several sites in diffentiating myocytes. Acetylation on Lys-4 increases DNA binding and transactivation. In terms of processing, sumoylated on Lys-391 with SUMO2 but not by SUMO1 represses transcriptional activity. Proteolytically cleaved in cerebellar granule neurons, probably by caspase 7, following neurotoxicity. Preferentially cleaves the CDK5-mediated hyperphosphorylated form which leads to neuron apoptosis and transcriptional inactivation. In terms of tissue distribution, widely expressed though mainly restricted to skeletal and cardiac muscle, brain, neurons and lymphocytes. Beta domain-lacking isoforms are the most predominantly expressed in all tissues including skeletal and cardiac muscle and brain. Only brain expresses all isoforms. Expression occurs primarily in the internal granule cell layer of the olfactory bulb, cortex, thalamus, hippocampus and cerebellum. Low levels in the cerebellum and hindbrain. Expressed throughout the cortex, including the frontal and entorhinal cortex, dentate gyrus, and basolateral amygdala. Selectively expressed in B-cells but not in T-cells, and its expression increases as B-cells mature.

It is found in the nucleus. The protein localises to the cytoplasm. The protein resides in the sarcoplasm. Functionally, transcription activator which binds specifically to the MEF2 element present in the regulatory regions of many muscle-specific genes. Controls cardiac morphogenesis and myogenesis, and is also involved in vascular development. Enhances transcriptional activation mediated by SOX18. May also be involved in neurogenesis and in the development of cortical architecture. Isoforms that lack the repressor domain are more active than isoform 1. Plays an essential role in hippocampal-dependent learning and memory by suppressing the number of excitatory synapses and thus regulating basal and evoked synaptic transmission. Crucial for normal neuronal development, distribution, and electrical activity in the neocortex. Necessary for proper development of megakaryocytes and platelets and for bone marrow B-lymphopoiesis. Required for B-cell survival and proliferation in response to BCR stimulation, efficient IgG1 antibody responses to T-cell-dependent antigens and for normal induction of germinal center B-cells. The polypeptide is Myocyte-specific enhancer factor 2C (Mus musculus (Mouse)).